A 235-amino-acid chain; its full sequence is Putative homeobox-leucine zipper protein ATHB-51 (235 aa).

Positions 74 to 133 (EMIKKKRLTSGQLASLERSFQEEIKLDSDRKVKLSRELGLQPRQIAVWFQNRRARWKAKQ) form a DNA-binding region, homeobox. A leucine-zipper region spans residues 134–162 (LEQLYDSLRQEYDVVSREKQMLHDEVKKL).

The protein belongs to the HD-ZIP homeobox family. Class I subfamily. Widely expressed.

The protein localises to the nucleus. Its function is as follows. Putative transcription factor. This chain is Putative homeobox-leucine zipper protein ATHB-51 (ATHB-51), found in Arabidopsis thaliana (Mouse-ear cress).